The primary structure comprises 673 residues: Methionine--tRNA ligase (673 aa).

The 'HIGH' region signature appears at 15-25 (PYANGPIHLGH). Positions 146, 149, 159, and 162 each coordinate Zn(2+). A 'KMSKS' region motif is present at residues 332–336 (KMSKS). Lys-335 contacts ATP. A tRNA-binding domain is found at 572-673 (DFAKLDLRIA…EGAQPGMRVK (102 aa)).

Belongs to the class-I aminoacyl-tRNA synthetase family. MetG type 1 subfamily. In terms of assembly, homodimer. The cofactor is Zn(2+).

The protein resides in the cytoplasm. The enzyme catalyses tRNA(Met) + L-methionine + ATP = L-methionyl-tRNA(Met) + AMP + diphosphate. Functionally, is required not only for elongation of protein synthesis but also for the initiation of all mRNA translation through initiator tRNA(fMet) aminoacylation. The protein is Methionine--tRNA ligase of Shewanella loihica (strain ATCC BAA-1088 / PV-4).